The following is a 383-amino-acid chain: Micronemal protein 3 (383 aa).

The signal sequence occupies residues 1 to 26 (MRGGTSALLHALTFSGAVWMCTPAEA). The propeptide at 27-66 (LPIQKSVQLGSFDKVVPSREVVSESLAPSFAVTETHSSVQ) is required for proper sorting to micronemes. Residues 67-145 (SPSKQETQLC…HPDKSYGGDC (79 aa)) form a lectin-like; required for the binding of host cells region. Required for proper sorting to micronemes stretches follow at residues 146–189 (SCEK…SEDP), 190–236 (CSKR…KRTG), and 237–290 (CHAF…LAEK). The region spanning 186 to 227 (SEDPCSKRGNAKCGPNGTCIVVDSVSYTCTCGDGETLVNLPE) is the EGF-like domain. Cystine bridges form between cysteine 190/cysteine 204 and cysteine 198/cysteine 214. N-linked (GlcNAc...) asparagine glycosylation occurs at asparagine 201. The involved in dimerization stretch occupies residues 294-359 (EFGISASSCK…HTVTCEKIKH (66 aa)).

Homodimer; dimerization is likely required for host cell binding but not for trafficking to micronemes. In terms of processing, removal of the propeptide occurs in a post-medial-Golgi compartment. Removal of the propeptide is required for the host cell binding. The presence of propeptide does not affect dimerization. The presence of propeptide does not affect sorting to micronemes.

The protein resides in the cytoplasmic vesicle. It localises to the secretory vesicle. The protein localises to the microneme. Its subcellular location is the secreted. It is found in the golgi apparatus. The protein resides in the endoplasmic reticulum. Its function is as follows. Adhesin; can bind both the host cells and the parasites. May be involved in parasite invasion by acting as a bridge between the parasite and the host cell. Triggers innate immune responses in mouse macrophages via the TLR11/MyD88/NF-kappa-B pathway. Induces TNF/TNF-alpha secretion in mouse macrophages. Induces secretion of IL6 in mouse and human macrophages likely via different mechanisms. Up-regulates expression of NOS2/iNOS in mouse macrophages. Induces mouse macrophage polarization. The polypeptide is Micronemal protein 3 (Toxoplasma gondii).